The sequence spans 408 residues: D-galactonate dehydratase family member OG2516_05608 (408 aa).

Mg(2+) is bound at residue Asp215. D-arabinonate is bound at residue His217. Glu241 and Glu267 together coordinate Mg(2+). 4 residues coordinate D-arabinonate: Glu267, Arg288, His317, and Glu344.

This sequence belongs to the mandelate racemase/muconate lactonizing enzyme family. GalD subfamily.

Its function is as follows. Has no detectable activity with D-mannonate and with a panel of 70 other acid sugars (in vitro), in spite of the conservation of the residues that are expected to be important for catalytic activity and cofactor binding. May have evolved a divergent function. This chain is D-galactonate dehydratase family member OG2516_05608, found in Oceanicola granulosus (strain ATCC BAA-861 / DSM 15982 / KCTC 12143 / HTCC2516).